The primary structure comprises 145 residues: Bacilliredoxin SAOUHSC_01610 (145 aa).

The protein belongs to the bacilliredoxin family.

This chain is Bacilliredoxin SAOUHSC_01610, found in Staphylococcus aureus (strain NCTC 8325 / PS 47).